A 700-amino-acid polypeptide reads, in one-letter code: Tectonic-2 (700 aa).

The signal sequence occupies residues 1–25 (MGSLSPLSLLWGLLLLQGVLRPLRG). Residues 26–665 (DPVFIPPFIR…YYQGEPQSQC (640 aa)) lie on the Extracellular side of the membrane. Residues asparagine 76, asparagine 82, asparagine 146, asparagine 156, and asparagine 389 are each glycosylated (N-linked (GlcNAc...) asparagine). The helical transmembrane segment at 666-682 (VAKGLMLLSLLMLAILL) threads the bilayer. The Cytoplasmic segment spans residues 683 to 700 (RHPWVRMCKARDSAAIYH).

Belongs to the tectonic family. Part of the tectonic-like complex (also named B9 complex). Significant expression is observed in brain, kidney and eye.

It localises to the membrane. The protein localises to the cytoplasm. The protein resides in the cytoskeleton. Its subcellular location is the cilium basal body. In terms of biological role, component of the tectonic-like complex, a complex localized at the transition zone of primary cilia and acting as a barrier that prevents diffusion of transmembrane proteins between the cilia and plasma membranes. Required for hedgehog signaling transduction. The chain is Tectonic-2 (Tctn2) from Mus musculus (Mouse).